Here is a 209-residue protein sequence, read N- to C-terminus: Large ribosomal subunit protein uL3 (209 aa).

Gln-150 bears the N5-methylglutamine mark.

The protein belongs to the universal ribosomal protein uL3 family. In terms of assembly, part of the 50S ribosomal subunit. Forms a cluster with proteins L14 and L19. Methylated by PrmB.

One of the primary rRNA binding proteins, it binds directly near the 3'-end of the 23S rRNA, where it nucleates assembly of the 50S subunit. The polypeptide is Large ribosomal subunit protein uL3 (Ectopseudomonas mendocina (strain ymp) (Pseudomonas mendocina)).